A 432-amino-acid chain; its full sequence is Negative regulator of systemic acquired resistance SNI1 (432 aa).

As to quaternary structure, interacts with SSN2. Binds to NTL9/CBNAC to promote its binding to promoters of target genes. Component of the SMC5-SMC6 complex which consists at least of SMC5 and SMC6B. Interacts with RAD17. As to expression, expressed at low levels in the veins.

The protein resides in the nucleus. Component of the SMC5-SMC6 complex, a complex involved in repair of DNA double-strand breaks by homologous recombination. Transcription repressor that prevents expression of pathogenesis-related genes (PR) via histone modifications and binding negative cis-acting elements at their promoters. Negative regulator of hypersensitive response (HR) and systemic acquired resistance (SAR) required to dampen the basal expression of pathogenesis related (PR) genes. Functions synergistically with NTL9/CBNAC as negative regulator of pathogen-induced PR1 expression and basal resistance to a virulent strain of P.syringae. Binds to the PR1 gene promoter to suppress defense response in the absence of pathogen challenge and is removed in response to induction. Negatively regulates both gene expression and DNA recombination during pathogen infection, thus being involved in short-term defense response and a long-term survival strategy. Prevents effective immune responses that involve activation of DNA damage responses, probably by negatively regulating the DNA damage sensors RAD17 and ATR. Negative regulator of defenses against the beet cyst nematode H.schachtii. The polypeptide is Negative regulator of systemic acquired resistance SNI1 (Arabidopsis thaliana (Mouse-ear cress)).